The primary structure comprises 249 residues: ATP synthase subunit a (249 aa).

Helical transmembrane passes span 26–46 (FTNS…FLYL), 84–104 (FFPF…LGLF), 114–134 (IVVT…YGFW), 143–163 (LFVP…IEVI), 185–205 (ITLK…VAGA), and 208–228 (AVLP…VAFL).

It belongs to the ATPase A chain family. As to quaternary structure, F-type ATPases have 2 components, CF(1) - the catalytic core - and CF(0) - the membrane proton channel. CF(1) has five subunits: alpha(3), beta(3), gamma(1), delta(1), epsilon(1). CF(0) has three main subunits: a(1), b(2) and c(9-12). The alpha and beta chains form an alternating ring which encloses part of the gamma chain. CF(1) is attached to CF(0) by a central stalk formed by the gamma and epsilon chains, while a peripheral stalk is formed by the delta and b chains.

The protein localises to the cell inner membrane. Functionally, key component of the proton channel; it plays a direct role in the translocation of protons across the membrane. In Chelativorans sp. (strain BNC1), this protein is ATP synthase subunit a.